The following is a 602-amino-acid chain: RecBCD enzyme subunit RecD (602 aa).

171 to 178 (GGPGTGKT) provides a ligand contact to ATP.

It belongs to the RecD family. As to quaternary structure, heterotrimer of RecB, RecC and RecD. All subunits contribute to DNA-binding.

It catalyses the reaction Couples ATP hydrolysis with the unwinding of duplex DNA at the replication fork by translocating in the 5'-3' direction. This creates two antiparallel DNA single strands (ssDNA). The leading ssDNA polymer is the template for DNA polymerase III holoenzyme which synthesizes a continuous strand.. The enzyme catalyses ATP + H2O = ADP + phosphate + H(+). Functionally, a helicase/nuclease that prepares dsDNA breaks (DSB) for recombinational DNA repair. Binds to DSBs and unwinds DNA via a highly rapid and processive ATP-dependent bidirectional helicase activity. Unwinds dsDNA until it encounters a Chi (crossover hotspot instigator) sequence from the 3' direction. Cuts ssDNA a few nucleotides 3' to the Chi site. The properties and activities of the enzyme are changed at Chi. The Chi-altered holoenzyme produces a long 3'-ssDNA overhang and facilitates RecA-binding to the ssDNA for homologous DNA recombination and repair. Holoenzyme degrades any linearized DNA that is unable to undergo homologous recombination. In the holoenzyme this subunit has ssDNA-dependent ATPase and 5'-3' helicase activity. When added to pre-assembled RecBC greatly stimulates nuclease activity and augments holoenzyme processivity. Negatively regulates the RecA-loading ability of RecBCD. This chain is RecBCD enzyme subunit RecD, found in Buchnera aphidicola subsp. Acyrthosiphon pisum (strain APS) (Acyrthosiphon pisum symbiotic bacterium).